The sequence spans 288 residues: MNYQRLEKLGEGTYAHVYKGQNRVTGEIVALKVIRIDADEGTPSTAIREISLMKELRHPNIMSLSDVLQTENKLMLVFEYMEKDLKKYMDTYGNQGALPPSQVKNFTQQLLKGISFCHENRVLHRDLKPQNLLINSRGELKLADFGLARSIGIPVNTFSNEVVTLWYRAPDVLLGSRVYSTSIDIWSVGCIMAEMATGRPLFAGSNNEDQLLKIFRLLGTPTEQSWPGISLLPEYKPTFPIYKAQDLAYLFPTFDPLGLDLLRRMLRLQPELRTTGQDALQHAWFLTA.

One can recognise a Protein kinase domain in the interval tyrosine 3 to phenylalanine 285. Residues leucine 9 to valine 17 and lysine 32 each bind ATP. Phosphothreonine is present on threonine 13. Phosphotyrosine is present on tyrosine 14. The active-site Proton acceptor is the aspartate 126.

This sequence belongs to the protein kinase superfamily. CMGC Ser/Thr protein kinase family. CDC2/CDKX subfamily. As to quaternary structure, interacts with the pas1 cyclin.

The catalysed reaction is L-seryl-[protein] + ATP = O-phospho-L-seryl-[protein] + ADP + H(+). It catalyses the reaction L-threonyl-[protein] + ATP = O-phospho-L-threonyl-[protein] + ADP + H(+). The chain is Serine/threonine-protein kinase pef1 (pef1) from Schizosaccharomyces pombe (strain 972 / ATCC 24843) (Fission yeast).